The chain runs to 356 residues: N-acyl-phosphatidylethanolamine-hydrolyzing phospholipase D 1 (356 aa).

Zn(2+)-binding residues include His-144 and His-146. Position 147 (Tyr-147) interacts with an N-acyl-1,2-diacyl-sn-glycero-3-phosphoethanolamine. Asp-148, His-149, His-217, and Asp-248 together coordinate Zn(2+). His-286 is an an N-acyl-1,2-diacyl-sn-glycero-3-phosphoethanolamine binding site. His-308 contributes to the Zn(2+) binding site.

Belongs to the NAPE-PLD family. Zn(2+) is required as a cofactor. Expressed in interneurons that are in close proximity to the primary sensory neurons. Predominantly expressed in the pharynx but can also be found in cell bodies of the dorsal and ventral nerve cords.

The enzyme catalyses an N-acyl-1,2-diacyl-sn-glycero-3-phosphoethanolamine + H2O = an N-acylethanolamine + a 1,2-diacyl-sn-glycero-3-phosphate + H(+). It catalyses the reaction 1,2-dihexadecanoyl-sn-glycero-3-phospho-(N-hexadecanoyl)-ethanolamine + H2O = 1,2-dihexadecanoyl-sn-glycero-3-phosphate + N-hexadecanoylethanolamine + H(+). It carries out the reaction N-(5Z,8Z,11Z,14Z-eicosatetraenoyl)-1,2-di-(9Z-octadecenoyl)-sn-glycero-3-phosphoethanolamine + H2O = N-(5Z,8Z,11Z,14Z-eicosatetraenoyl)-ethanolamine + 1,2-di-(9Z-octadecenoyl)-sn-glycero-3-phosphate + H(+). Functionally, D-type phospholipase that hydrolyzes N-acyl-phosphatidylethanolamines (NAPEs) to produce bioactive N-acylethanolamines/fatty acid ethanolamides (NAEs/FAEs) and phosphatidic acid. NAEs are bioactive lipids that are involved in diverse physiological processes such as growth and lifespan. The chain is N-acyl-phosphatidylethanolamine-hydrolyzing phospholipase D 1 from Caenorhabditis elegans.